The chain runs to 454 residues: Carbamoyl phosphate synthase arginine-specific small chain (454 aa).

A mitochondrion-targeting transit peptide spans 1 to 29 (MMFSRFFKAVPARAPAFSSPLPVYQARTM). Positions 219 to 406 (HVAVLDCGVK…IDSVKKYKNS (188 aa)) constitute a Glutamine amidotransferase type-1 domain. The active-site Nucleophile is the Cys295. Active-site residues include His379 and Glu381.

This sequence belongs to the CarA family. In terms of assembly, heterodimer composed of 2 chains; the small (or glutamine) chain promotes the hydrolysis of glutamine to ammonia, which is used by the large (or ammonia) chain to synthesize carbamoyl phosphate.

It localises to the mitochondrion matrix. The catalysed reaction is hydrogencarbonate + L-glutamine + 2 ATP + H2O = carbamoyl phosphate + L-glutamate + 2 ADP + phosphate + 2 H(+). The enzyme catalyses L-glutamine + H2O = L-glutamate + NH4(+). The protein operates within amino-acid biosynthesis; L-arginine biosynthesis; carbamoyl phosphate from bicarbonate: step 1/1. In terms of biological role, small subunit of the arginine-specific carbamoyl phosphate synthase (CPSase). CPSase catalyzes the formation of carbamoyl phosphate from the ammonia moiety of glutamine, carbonate, and phosphate donated by ATP, the first step of the arginine biosynthetic pathway. The small subunit (glutamine amidotransferase) binds and cleaves glutamine to supply the large subunit with the substrate ammonia. The chain is Carbamoyl phosphate synthase arginine-specific small chain (cpa-1) from Emericella nidulans (strain FGSC A4 / ATCC 38163 / CBS 112.46 / NRRL 194 / M139) (Aspergillus nidulans).